A 108-amino-acid chain; its full sequence is Glutaredoxin 4 (108 aa).

Residues 4 to 106 form the Glutaredoxin domain; the sequence is FQKIKKQIQD…KLILKVKKKY (103 aa). Residue Lys-21 participates in glutathione binding. Cys-29 provides a ligand contact to [2Fe-2S] cluster. Residues Arg-58, Phe-70, and 83-84 each bind glutathione; that span reads CS.

This sequence belongs to the glutaredoxin family. Monothiol subfamily. As to quaternary structure, homodimer.

Its subcellular location is the cytoplasm. Its function is as follows. Monothiol glutaredoxin involved in the biogenesis of iron-sulfur clusters. This chain is Glutaredoxin 4 (grxD), found in Buchnera aphidicola subsp. Acyrthosiphon pisum (strain APS) (Acyrthosiphon pisum symbiotic bacterium).